We begin with the raw amino-acid sequence, 218 residues long: N-(5'-phosphoribosyl)anthranilate isomerase (218 aa).

The protein belongs to the TrpF family.

The catalysed reaction is N-(5-phospho-beta-D-ribosyl)anthranilate = 1-(2-carboxyphenylamino)-1-deoxy-D-ribulose 5-phosphate. It functions in the pathway amino-acid biosynthesis; L-tryptophan biosynthesis; L-tryptophan from chorismate: step 3/5. This is N-(5'-phosphoribosyl)anthranilate isomerase from Rhodospirillum rubrum (strain ATCC 11170 / ATH 1.1.1 / DSM 467 / LMG 4362 / NCIMB 8255 / S1).